The chain runs to 362 residues: MTSSPTSTQESSTSWYLLLQQLIDGESLSRSQAAELMQGWLSEAVPPELSGAILTALNFKGVSADELTGMAEVLQSQSKMGTGENYSQLPITNSPFSIIDTCGTGGDGSSTFNISTAVAFVAAAYGVPVAKHGNRSASSLTGSADVLEALGVNLGASPEKVQAALQEVGITFLFAPGWHPALKAVATLRRTLRIRTVFNLLGPLVNPLRPTGQVVGLFTPKLLTTVAQALDNLGKQKAIVLHGRERLDEAGLGDLTDLAVLSDGELQLTTINPQEVGVTPAPIGALRGGDVQENAEILKAVLQGKGTQAQQDAVALNAALALQVAGAVPLLDHAQGVSVAKEILQTGTAWAKLAQLVYFLGN.

5-phospho-alpha-D-ribose 1-diphosphate is bound by residues G103, 106 to 107 (GD), T111, 113 to 116 (NIST), 131 to 139 (KHGNRSASS), and S143. G103 contacts anthranilate. A Mg(2+)-binding site is contributed by S115. N134 is a binding site for anthranilate. R189 provides a ligand contact to anthranilate. Mg(2+) is bound by residues D248 and E249.

The protein belongs to the anthranilate phosphoribosyltransferase family. In terms of assembly, homodimer. Requires Mg(2+) as cofactor.

The enzyme catalyses N-(5-phospho-beta-D-ribosyl)anthranilate + diphosphate = 5-phospho-alpha-D-ribose 1-diphosphate + anthranilate. Its pathway is amino-acid biosynthesis; L-tryptophan biosynthesis; L-tryptophan from chorismate: step 2/5. Catalyzes the transfer of the phosphoribosyl group of 5-phosphorylribose-1-pyrophosphate (PRPP) to anthranilate to yield N-(5'-phosphoribosyl)-anthranilate (PRA). The protein is Anthranilate phosphoribosyltransferase 2 of Nostoc sp. (strain PCC 7120 / SAG 25.82 / UTEX 2576).